A 152-amino-acid polypeptide reads, in one-letter code: Urease accessory protein UreE (152 aa).

This sequence belongs to the UreE family.

Its subcellular location is the cytoplasm. Involved in urease metallocenter assembly. Binds nickel. Probably functions as a nickel donor during metallocenter assembly. This is Urease accessory protein UreE from Citrobacter koseri (strain ATCC BAA-895 / CDC 4225-83 / SGSC4696).